A 207-amino-acid chain; its full sequence is Abscisic acid receptor PYL4 (207 aa).

The interval 45 to 195 (HEVGPNQCCS…NLQSLAKIAE (151 aa)) is START-like. A disulfide bridge connects residues Cys52 and Cys176. Abscisate-binding positions include Lys81, 111-116 (AASSTE), 138-144 (RLSNYRS), and Glu160. Positions 107-111 (SGLPA) match the Gate loop motif. Residues 137–139 (HRL) carry the Latch loop motif.

It belongs to the PYR/PYL/RCAR abscisic acid intracellular receptor family. As to quaternary structure, monomer. Homodimer. Binds ABA on one subunit only. Interacts with HAB1, ABI1 and ABI2, and possibly with other PP2Cs. Binds to CARs protein in an ABA-independent manner, both at the plasma membrane and in the nucleus. Interacts directly with CAR1 and CAR4. Interacts with TOPP1. Interacts with DDA1. Interacts with FREE1 (via N-terminus). Interacts with the E3 ubiquitin-protein ligase RSL1 at the plasma membrane. Post-translationally, ubiquitynated and degraded by the proteasome upon binding to the E3 ubiquitin-protein ligase RSL1 at the plasma membrane.

Its subcellular location is the cytoplasm. It is found in the nucleus. It localises to the cell membrane. The protein localises to the vacuole. In terms of biological role, receptor for abscisic acid (ABA) required for ABA-mediated responses such as stomatal closure and germination inhibition. Inhibits the activity of group-A protein phosphatases type 2C (PP2Cs) when activated by ABA. Can be activated by both (-)-ABA and (+)-ABA. This chain is Abscisic acid receptor PYL4, found in Arabidopsis thaliana (Mouse-ear cress).